The primary structure comprises 509 residues: DNA primase DnaG (509 aa).

In terms of domain architecture, Toprim spans 167 to 253; that stretch reads DAIVVVEGRA…CVEDLARHEV (87 aa). Residues Glu173, Asp215, and Asp217 each coordinate Mg(2+). Residues 267-411 form a disordered region; it reads KQAASDDADP…ASTDEQPKTL (145 aa). Low complexity-rich tracts occupy residues 313–331 and 383–402; these read PVSS…ETAA and ESTA…AAGA.

Belongs to the archaeal DnaG primase family. In terms of assembly, forms a ternary complex with MCM helicase and DNA. It depends on Mg(2+) as a cofactor.

The enzyme catalyses ssDNA + n NTP = ssDNA/pppN(pN)n-1 hybrid + (n-1) diphosphate.. RNA polymerase that catalyzes the synthesis of short RNA molecules used as primers for DNA polymerase during DNA replication. This is DNA primase DnaG from Natronomonas pharaonis (strain ATCC 35678 / DSM 2160 / CIP 103997 / JCM 8858 / NBRC 14720 / NCIMB 2260 / Gabara) (Halobacterium pharaonis).